The chain runs to 492 residues: Vacuolar fusion protein CCZ1 homolog (492 aa).

A disordered region spans residues 255–275; it reads SVHAGPTSSSSNGTASVERPL. The segment covering 260–269 has biased composition (polar residues); the sequence is PTSSSSNGTA.

The protein belongs to the CCZ1 family. As to quaternary structure, interacts with MON1.

The protein localises to the endosome. Its subcellular location is the prevacuolar compartment. In terms of biological role, plays an important role in membrane trafficking through the secretory apparatus. In complex with MON1, acts as a guanine exchange factor (GEF) for Rab7 protein family. Promotes the exchange of GDP to GTP, converting it from an inactive GDP-bound form into an active GTP-bound form. The active form is involved in protein trafficking from prevacuolar compartments (PVCs) to vacuoles. May serve as a linker between Rab5 and Rab7 protein families in PVCs and mediate PVC maturation. The protein is Vacuolar fusion protein CCZ1 homolog of Oryza sativa subsp. japonica (Rice).